The chain runs to 57 residues: Catalase-1 (57 aa).

Residue Tyr-37 participates in heme binding.

Homodimer. Requires heme as cofactor.

The enzyme catalyses 2 H2O2 = O2 + 2 H2O. In terms of biological role, decomposes hydrogen peroxide into water and oxygen; serves to protect cells from the toxic effects of hydrogen peroxide. This Comamonas terrigena protein is Catalase-1.